Reading from the N-terminus, the 639-residue chain is Cystathionine gamma-synthase (639 aa).

The residue at position 443 (Lys443) is an N6-(pyridoxal phosphate)lysine.

The protein belongs to the trans-sulfuration enzymes family. MET7 subfamily. It depends on pyridoxal 5'-phosphate as a cofactor.

Its subcellular location is the cytoplasm. The protein resides in the nucleus. It catalyses the reaction O-succinyl-L-homoserine + L-cysteine = L,L-cystathionine + succinate + H(+). It functions in the pathway amino-acid biosynthesis; L-methionine biosynthesis via de novo pathway; L-cystathionine from O-succinyl-L-homoserine: step 1/1. Functionally, catalyzes the formation of L-cystathionine from O-succinyl-L-homoserine (OSHS) and L-cysteine, via a gamma-replacement reaction. In the absence of thiol, catalyzes gamma-elimination to form 2-oxobutanoate, succinate and ammonia. This chain is Cystathionine gamma-synthase, found in Saccharomyces cerevisiae (strain ATCC 204508 / S288c) (Baker's yeast).